Consider the following 517-residue polypeptide: Cytochrome P450 monooxygenase stcB (517 aa).

Residue C461 coordinates heme.

It belongs to the cytochrome P450 family. Requires heme as cofactor.

It functions in the pathway mycotoxin biosynthesis; sterigmatocystin biosynthesis. Functionally, cytochrome P450 monooxygenase; part of the gene cluster that mediates the biosynthesis of sterigmatocystin (ST), a polyketide-derived furanocoumarin which is part of the most toxic and carcinogenic compounds among the known mycotoxins. The first step in the biosynthesis of sterigmatocystin is the production of hexanoate by the fatty acid synthase (FAS) units stcJ and stcK. The polyketide backbone is assembled by the non-reducing polyketide synthase stcA by condensation of the starter hexanoyl-CoA and 7 malonyl-CoA extender units followed by cyclization and release of norsolorinic acid. Norsolorinic acid is the first stable intermediate in the biosynthesis of sterigmatocystin and is converted into averantin (AVN) by the ketoreductase stcE which reduces the hexanoate ketone to an alcohol. Averantin is then oxidized into 5'-hydroxyaverantin (HAVN) by the cytochrome P450 monooxygenase stcF. 5'-hydroxyaverantin is further converted to 5'-oxyaverantin (OAVN) by the 5'-hydroxyaverantin dehydrogenase stcG. The next step is the conversion of OAVN into averufin (AVF) which is catalyzed by a yet to be identified enzyme. The cytochrome P450 monooxygenase stcB and the flavin-binding monooxygenase stcW are both required for the conversion of averufin to 1-hydroxyversicolorone. The esterase stcI probably catalyzes the formation of versiconal hemiacetal acetate from 1-hydroxyversicolorone. The oxydoreductase stcN then probably catalyzes the biosynthetic step from versiconal to versicolorin B (VERB). The next step is performed by the versicolorin B desaturase stcL to produce versicolorin A (VERA). The ketoreductase stcU and the cytochrome P450 monooxygenase stcS are involved in the conversion of versicolorin A to demethylsterigmatocystin. The Baeyer-Villiger oxidas stcQ and the reductase stcR might be involved in the biosynthetic step from versicolorin A to demethylsterigmatocystin. The final step in the biosynthesis of sterigmatocystin is the methylation of demethylsterigmatocystin catalyzed by the methyltransferase stcP. This chain is Cytochrome P450 monooxygenase stcB, found in Emericella nidulans (strain FGSC A4 / ATCC 38163 / CBS 112.46 / NRRL 194 / M139) (Aspergillus nidulans).